The primary structure comprises 367 residues: Riboflavin biosynthesis protein VVA0006 (367 aa).

215–219 (RLHSE) is a binding site for GTP. Zn(2+) is bound by residues Cys220, Cys231, and Cys233. GTP-binding positions include Gln236, 258-260 (EGR), and Thr280. Asp292 functions as the Proton acceptor in the catalytic mechanism. The active-site Nucleophile is Arg294. GTP is bound by residues Thr315 and Lys320.

This sequence in the N-terminal section; belongs to the YbiA family. The protein in the C-terminal section; belongs to the GTP cyclohydrolase II family. Zn(2+) is required as a cofactor.

The enzyme catalyses 2,5-diamino-6-hydroxy-4-(5-phosphoribosylamino)-pyrimidine + H2O = 2,5,6-triamino-4-hydroxypyrimidine + D-ribose 5-phosphate. It catalyses the reaction 5-amino-6-(5-phospho-D-ribosylamino)uracil + H2O = 5,6-diaminouracil + D-ribose 5-phosphate. The catalysed reaction is GTP + 4 H2O = 2,5-diamino-6-hydroxy-4-(5-phosphoribosylamino)-pyrimidine + formate + 2 phosphate + 3 H(+). It functions in the pathway cofactor biosynthesis; riboflavin biosynthesis; 5-amino-6-(D-ribitylamino)uracil from GTP: step 1/4. Catalyzes the hydrolysis of the N-glycosidic bond in the first two intermediates of riboflavin biosynthesis, which are highly reactive metabolites, yielding relatively innocuous products. Thus, can divert a surplus of harmful intermediates into relatively harmless products and pre-empt the damage these intermediates would otherwise do. Has no activity against GTP, nucleoside monophosphates or ADP-ribose. Its function is as follows. Catalyzes the conversion of GTP to 2,5-diamino-6-ribosylamino-4(3H)-pyrimidinone 5'-phosphate (DARP), formate and pyrophosphate. The chain is Riboflavin biosynthesis protein VVA0006 from Vibrio vulnificus (strain YJ016).